Reading from the N-terminus, the 1891-residue chain is Transcription initiation factor TFIID subunit 1 (1891 aa).

Disordered stretches follow at residues 1–34 (MGPGWAGLLQDKGGGSPSVVMSDTDSDEESAGGG), 154–180 (KLMPPPPPPPGPLKKEKDQDDITGVSE), and 197–224 (ASEKVDFSSSSDSESEMGPQDAAQSESK). Residues 1 to 435 (MGPGWAGLLQ…VTQLHWEDDI (435 aa)) enclose the Protein kinase 1 domain. The span at 156-165 (MPPPPPPPGP) shows a compositional bias: pro residues. The segment covering 197–208 (ASEKVDFSSSSD) has biased composition (low complexity). S328 carries the phosphoserine; by autocatalysis modification. A disordered region spans residues 535–556 (PDEKEEATSNSPSKENKKESSL). The segment at 538–997 (KEEATSNSPS…KIPNKPTQQK (460 aa)) is histone acetyltransferase (HAT). K565 bears the N6-acetyllysine mark. Residues K570 and K583 each participate in a glycyl lysine isopeptide (Lys-Gly) (interchain with G-Cter in SUMO2) cross-link. Disordered stretches follow at residues 990-1009 (PNKPTQQKDDKEPQPVKKTV), 1128-1148 (MLQNKKTSSQLSREREEQERK), and 1254-1278 (RLKRNQEKEKLKGPPEKKPKKMKER). 3 stretches are compositionally biased toward basic and acidic residues: residues 995–1004 (QQKDDKEPQP), 1139–1148 (SREREEQERK), and 1254–1270 (RLKRNQEKEKLKGPPEK). Positions 1216-1294 (VRIRTTKDEE…CGACGAIGHM (79 aa)) form a DNA-binding region, HMG box. Residues 1363–1650 (VLKFPKQQLP…TAKEAALEEA (288 aa)) form an interaction with ASF1A and ASF1B region. Positions 1372 to 1379 (PPKKKRRV) match the Nuclear localization signal motif. 2 consecutive Bromo domains span residues 1397 to 1505 (RRRT…LKEK) and 1519 to 1628 (LLDD…LTEY). One can recognise a Protein kinase 2 domain in the interval 1446–1891 (MDLQTLRENV…AGDTDLDSDE (446 aa)). 2 disordered regions span residues 1651–1676 (ELESLDPMTPGPYTPQPPDLYDNNTS) and 1690–1891 (SNLS…DSDE). Residues 1659 to 1668 (TPGPYTPQPP) show a composition bias toward pro residues. 2 positions are modified to phosphoserine: S1690 and S1693. Over residues 1690-1708 (SNLSVLDIPSATSEKQLTQ) the composition is skewed to polar residues. Composition is skewed to acidic residues over residues 1711–1723 (GDGDGDLADEEEG) and 1741–1756 (EGEDDEEDAGSDEEGD). Residues 1764–1778 (LSESGSDSDVESGSL) are compositionally biased toward low complexity. Phosphoserine occurs at positions 1799, 1802, and 1820. A compositionally biased stretch (polar residues) spans 1830–1840 (KSNTQDTSFSS). A compositionally biased stretch (acidic residues) spans 1846-1855 (VSEEEEDEEE). S1847 carries the post-translational modification Phosphoserine. Positions 1858-1867 (SGPSVLSQVH) are enriched in polar residues.

Belongs to the TAF1 family. As to quaternary structure, component of the TFIID basal transcription factor complex, composed of TATA-box-binding protein TBP, and a number of TBP-associated factors (TAFs). TFIID consists of at least TBP, TAF1, TAF2, TAF3, TAF4, TAF5, TAF6, TAF7, TAF8, TAF9, TAF10, TAF11, TAF12 and TAF13. Interacts with TAF7; the interaction is direct. TAF1, when part of the TFIID complex, interacts with C-terminus of TP53. Part of a TFIID-containing RNA polymerase II pre-initiation complex that is composed of TBP and at least GTF2A1, GTF2A2, GTF2E1, GTF2E2, GTF2F1, GTF2H2, GTF2H3, GTF2H4, GTF2H5, GTF2B, TCEA1, ERCC2, ERCC3, TAF1, TAF2, TAF3, TAF4, TAF5, TAF6, TAF7, TAF8, TAF9, TAF10, TAF11, TAF12 and TAF13. Component of some MLL1/MLL complex, at least composed of the core components KMT2A/MLL1, ASH2L, HCFC1/HCF1, WDR5 and RBBP5, as well as the facultative components BACC1, CHD8, E2F6, HSP70, INO80C, KANSL1, LAS1L, MAX, MCRS1, MGA, KAT8/MOF, PELP1, PHF20, PRP31, RING2, RUVB1/TIP49A, RUVB2/TIP49B, SENP3, TAF1, TAF4, TAF6, TAF7, TAF9 and TEX10. RB1 interacts with the N-terminal domain of TAF1. Interacts with ASF1A and ASF1B. Interacts (via bromo domains) with acetylated lysine residues on the N-terminus of histone H1.4, H2A, H2B, H3 and H4 (in vitro). Mg(2+) is required as a cofactor. In terms of processing, phosphorylated by casein kinase II in vitro.

The protein localises to the nucleus. The catalysed reaction is L-seryl-[protein] + ATP = O-phospho-L-seryl-[protein] + ADP + H(+). It catalyses the reaction L-threonyl-[protein] + ATP = O-phospho-L-threonyl-[protein] + ADP + H(+). The enzyme catalyses L-lysyl-[protein] + acetyl-CoA = N(6)-acetyl-L-lysyl-[protein] + CoA + H(+). Its activity is regulated as follows. Autophosphorylates on Ser residues. Inhibited by retinoblastoma tumor suppressor protein, RB1. Binding to TAF1 or CIITA inhibits the histone acetyltransferase activity. In terms of biological role, the TFIID basal transcription factor complex plays a major role in the initiation of RNA polymerase II (Pol II)-dependent transcription. TFIID recognizes and binds promoters with or without a TATA box via its subunit TBP, a TATA-box-binding protein, and promotes assembly of the pre-initiation complex (PIC). The TFIID complex consists of TBP and TBP-associated factors (TAFs), including TAF1, TAF2, TAF3, TAF4, TAF5, TAF6, TAF7, TAF8, TAF9, TAF10, TAF11, TAF12 and TAF13. TAF1 is the largest component and core scaffold of the TFIID complex, involved in nucleating complex assembly. TAF1 forms a promoter DNA binding subcomplex of TFIID, together with TAF7 and TAF2. Contains novel N- and C-terminal Ser/Thr kinase domains which can autophosphorylate or transphosphorylate other transcription factors. Phosphorylates TP53 on 'Thr-55' which leads to MDM2-mediated degradation of TP53. Phosphorylates GTF2A1 and GTF2F1 on Ser residues. Possesses DNA-binding activity. Exhibits histone acetyltransferase activity towards histones H3 and H4. Essential for progression of the G1 phase of the cell cycle. In Mus musculus (Mouse), this protein is Transcription initiation factor TFIID subunit 1.